Here is a 122-residue protein sequence, read N- to C-terminus: Large ribosomal subunit protein uL14 (122 aa).

It belongs to the universal ribosomal protein uL14 family. Part of the 50S ribosomal subunit. Forms a cluster with proteins L3 and L19. In the 70S ribosome, L14 and L19 interact and together make contacts with the 16S rRNA in bridges B5 and B8.

Its function is as follows. Binds to 23S rRNA. Forms part of two intersubunit bridges in the 70S ribosome. The polypeptide is Large ribosomal subunit protein uL14 (Pseudomonas paraeruginosa (strain DSM 24068 / PA7) (Pseudomonas aeruginosa (strain PA7))).